The primary structure comprises 447 residues: Tubulin beta-1 chain (447 aa).

GTP-binding residues include Q11, E69, S138, G142, T143, G144, N204, and N226. E69 provides a ligand contact to Mg(2+). A disordered region spans residues 424–447; it reads QYQDATAEEEGEGDEEEAEGEAAA. The span at 429–447 shows a compositional bias: acidic residues; it reads TAEEEGEGDEEEAEGEAAA.

It belongs to the tubulin family. As to quaternary structure, dimer of alpha and beta chains. A typical microtubule is a hollow water-filled tube with an outer diameter of 25 nm and an inner diameter of 15 nM. Alpha-beta heterodimers associate head-to-tail to form protofilaments running lengthwise along the microtubule wall with the beta-tubulin subunit facing the microtubule plus end conferring a structural polarity. Microtubules usually have 13 protofilaments but different protofilament numbers can be found in some organisms and specialized cells. Requires Mg(2+) as cofactor.

It is found in the cytoplasm. The protein resides in the cytoskeleton. Its function is as follows. Tubulin is the major constituent of microtubules, a cylinder consisting of laterally associated linear protofilaments composed of alpha- and beta-tubulin heterodimers. Microtubules grow by the addition of GTP-tubulin dimers to the microtubule end, where a stabilizing cap forms. Below the cap, tubulin dimers are in GDP-bound state, owing to GTPase activity of alpha-tubulin. The polypeptide is Tubulin beta-1 chain (TUBB1) (Cyanophora paradoxa).